Reading from the N-terminus, the 177-residue chain is Large ribosomal subunit protein uL6 (177 aa).

This sequence belongs to the universal ribosomal protein uL6 family. Part of the 50S ribosomal subunit.

Functionally, this protein binds to the 23S rRNA, and is important in its secondary structure. It is located near the subunit interface in the base of the L7/L12 stalk, and near the tRNA binding site of the peptidyltransferase center. This is Large ribosomal subunit protein uL6 from Rhizobium meliloti (strain 1021) (Ensifer meliloti).